A 383-amino-acid polypeptide reads, in one-letter code: Cytochrome b (383 aa).

The next 4 helical transmembrane spans lie at 31–51, 75–97, 112–132, and 178–198; these read FGSLAGIMLVVQILTGIFLAM, WLMRYTHANGASFFFIVVYVHIF, LWCSGVIIFILMMATAFMGYV, and FFSLHFTFPFVIVGAVLIHLI. Histidine 81 and histidine 95 together coordinate heme b. Heme b contacts are provided by histidine 182 and histidine 196. Histidine 201 contributes to the a ubiquinone binding site. 4 helical membrane passes run 224–244, 288–308, 320–340, and 347–367; these read FYTKDLFGLMVLFLVFFIFIF, IGGVIAMFGSLIVLLTIPFTN, IFKVCYWLLVVAFLLLGWVGQ, and YTEIGIISMIYYFFFFIIIIP.

The protein belongs to the cytochrome b family. Fungal cytochrome b-c1 complex contains 10 subunits; 3 respiratory subunits, 2 core proteins and 5 low-molecular weight proteins. Cytochrome b-c1 complex is a homodimer. Heme b serves as cofactor.

It is found in the mitochondrion inner membrane. In terms of biological role, component of the ubiquinol-cytochrome c reductase complex (complex III or cytochrome b-c1 complex) that is part of the mitochondrial respiratory chain. The b-c1 complex mediates electron transfer from ubiquinol to cytochrome c. Contributes to the generation of a proton gradient across the mitochondrial membrane that is then used for ATP synthesis. The protein is Cytochrome b (cob) of Phytophthora megasperma (Potato pink rot fungus).